A 404-amino-acid polypeptide reads, in one-letter code: Nicotinate phosphoribosyltransferase (404 aa).

Histidine 224 carries the phosphohistidine; by autocatalysis modification.

Belongs to the NAPRTase family. Post-translationally, transiently phosphorylated on a His residue during the reaction cycle. Phosphorylation strongly increases the affinity for substrates and increases the rate of nicotinate D-ribonucleotide production. Dephosphorylation regenerates the low-affinity form of the enzyme, leading to product release.

It catalyses the reaction nicotinate + 5-phospho-alpha-D-ribose 1-diphosphate + ATP + H2O = nicotinate beta-D-ribonucleotide + ADP + phosphate + diphosphate. The protein operates within cofactor biosynthesis; NAD(+) biosynthesis; nicotinate D-ribonucleotide from nicotinate: step 1/1. Its function is as follows. Catalyzes the synthesis of beta-nicotinate D-ribonucleotide from nicotinate and 5-phospho-D-ribose 1-phosphate at the expense of ATP. The polypeptide is Nicotinate phosphoribosyltransferase (Photorhabdus laumondii subsp. laumondii (strain DSM 15139 / CIP 105565 / TT01) (Photorhabdus luminescens subsp. laumondii)).